The chain runs to 450 residues: Saccharopine dehydrogenase [NADP(+), L-glutamate-forming] (450 aa).

Residues 9 to 12 (SGFV), 32 to 34 (CRT), 54 to 55 (DV), Ile75, 97 to 98 (TS), 124 to 126 (VDP), and Ser174 each bind NADP(+). L-saccharopine contacts are provided by residues 98-99 (SY) and Asp125. L-saccharopine is bound by residues Arg223 and 244–246 (TLR).

Belongs to the saccharopine dehydrogenase family. As to quaternary structure, homodimer.

Its subcellular location is the cytoplasm. The catalysed reaction is L-saccharopine + NADP(+) + H2O = (S)-2-amino-6-oxohexanoate + L-glutamate + NADPH + H(+). The protein operates within amino-acid biosynthesis; L-lysine biosynthesis via AAA pathway; L-lysine from L-alpha-aminoadipate (fungal route): step 2/3. In Schizosaccharomyces pombe (strain 972 / ATCC 24843) (Fission yeast), this protein is Saccharopine dehydrogenase [NADP(+), L-glutamate-forming].